The sequence spans 235 residues: Motile sperm domain-containing protein 3 (235 aa).

Disordered regions lie at residues 1–30 and 143–170; these read MRRGAPQDQELVGPGAPGRGSRGAPPPSGP and ELQGQSDPTPHPEPHSWTASSTAQPFPE. Residues 33–145 form the MSP domain; that stretch reads PVLVFPPDLV…RAPAYPLELQ (113 aa). Helical transmembrane passes span 180 to 200 and 213 to 233; these read SFLLFLLMGTVSVAFLLLPLQ and VSLGQKLVAAYVLGLLTMVFL.

It is found in the membrane. The polypeptide is Motile sperm domain-containing protein 3 (MOSPD3) (Bos taurus (Bovine)).